The chain runs to 234 residues: Protein SOP4 (234 aa).

The N-terminal stretch at 1–18 is a signal peptide; sequence MFSQIVLLLSAFIYVVSA. Residues 19–188 lie on the Lumenal side of the membrane; sequence TARRGTIKGR…VGNILNSRWK (170 aa). N-linked (GlcNAc...) asparagine glycosylation is found at Asn35, Asn53, Asn85, Asn115, and Asn170. The chain crosses the membrane as a helical span at residues 189 to 209; the sequence is LAGVITLIALVVFPIIVEKLD. At 210–234 the chain is on the cytoplasmic side; the sequence is PETARAIREEAKRKQREKYAAVASK.

This sequence belongs to the SOP4 family.

It is found in the endoplasmic reticulum membrane. Involved in the export of PMA1, possibly through the monitoring or assisting of PMA1 folding and acquisition of competence to enter vesicles. The polypeptide is Protein SOP4 (SOP4) (Saccharomyces cerevisiae (strain YJM789) (Baker's yeast)).